The primary structure comprises 363 residues: Chorismate synthase (363 aa).

Arg-48 contributes to the NADP(+) binding site. FMN-binding positions include 125-127 (RSS), 238-239 (NA), Gly-278, 293-297 (KPTAS), and Arg-319.

It belongs to the chorismate synthase family. As to quaternary structure, homotetramer. The cofactor is FMNH2.

The catalysed reaction is 5-O-(1-carboxyvinyl)-3-phosphoshikimate = chorismate + phosphate. It participates in metabolic intermediate biosynthesis; chorismate biosynthesis; chorismate from D-erythrose 4-phosphate and phosphoenolpyruvate: step 7/7. Catalyzes the anti-1,4-elimination of the C-3 phosphate and the C-6 proR hydrogen from 5-enolpyruvylshikimate-3-phosphate (EPSP) to yield chorismate, which is the branch point compound that serves as the starting substrate for the three terminal pathways of aromatic amino acid biosynthesis. This reaction introduces a second double bond into the aromatic ring system. This chain is Chorismate synthase, found in Acinetobacter baumannii (strain SDF).